We begin with the raw amino-acid sequence, 457 residues long: NAC domain-containing protein 69 (457 aa).

Residues 4–153 (DLVGYRFYPT…NYVICQVMYK (150 aa)) form the NAC domain. A DNA-binding region spans residues 107 to 159 (IGIKKTLVYYEGRVPKGVWTPWVMHEYHITCLPQDQRNYVICQVMYKGEDGDV). Disordered regions lie at residues 158-180 (DVPS…SNTV) and 302-332 (DSNS…SNRQ). Positions 162-180 (GGNNSSEPSQSLVSDSNTV) are enriched in polar residues. Residues 302–311 (DSNSDAESIS) are compositionally biased toward low complexity. A compositionally biased stretch (polar residues) spans 312-332 (ATSYQGTSSPGDDSVGSSNRQ). Residues 421–441 (IYLMRMIIGFILLLALISNII) form a helical membrane-spanning segment.

The protein resides in the membrane. Its subcellular location is the nucleus. Functionally, transcription activator activated by proteolytic cleavage through regulated intramembrane proteolysis (RIP). Involved in salt stress response during seed germination and seedling growth. Binds the auxin-responsive IAA30 gene promoter and may serve as a molecular link that interconnects a developmental feedback loop of auxin signaling with a salt signal transduction pathway during seed germination. This chain is NAC domain-containing protein 69 (NAC69), found in Arabidopsis thaliana (Mouse-ear cress).